Reading from the N-terminus, the 675-residue chain is Heat shock 70 kDa protein, mitochondrial (675 aa).

Residues 1-51 (MAAVLRSLRRRDVASATFSAYRSLTGSTKPAYVAQKWSCLARPFSSRPAGN) constitute a mitochondrion transit peptide. Positions 638-675 (VSKIGEHMSGGSSGGSSAGGSQGGGDQAPEAEYEEVKK) are disordered. The segment covering 648–663 (GSSGGSSAGGSQGGGD) has biased composition (gly residues). The span at 666–675 (PEAEYEEVKK) shows a compositional bias: acidic residues.

Belongs to the heat shock protein 70 family.

It localises to the mitochondrion. The sequence is that of Heat shock 70 kDa protein, mitochondrial from Phaseolus vulgaris (Kidney bean).